The sequence spans 215 residues: Ankyrin repeat domain-containing protein 49 (215 aa).

2 ANK repeats span residues D81–A110 and L114–A143.

As to quaternary structure, interacts with Bdbt; interaction promotes the stability of both complex members.

Its subcellular location is the cytoplasm. It localises to the cytosol. The protein resides in the cell membrane. Functionally, required for regulating the establishment of planar cell polarity in the wing. Forms a complex with Bdbt which likely functions in the regulation of planar polarity by promoting the activity of Dco during planar polarity establishment. Within the complex, probably functions to stabilize Bdbt, while Bdbt directly promotes Dco activity in regulating phosphorylation of core proteins such as dsh, and asymmetric localization. The protein is Ankyrin repeat domain-containing protein 49 of Drosophila melanogaster (Fruit fly).